The sequence spans 576 residues: V-type ATP synthase alpha chain (576 aa).

An ATP-binding site is contributed by 238–245; that stretch reads GPFGAGKT.

The protein belongs to the ATPase alpha/beta chains family.

The catalysed reaction is ATP + H2O + 4 H(+)(in) = ADP + phosphate + 5 H(+)(out). Produces ATP from ADP in the presence of a proton gradient across the membrane. The V-type alpha chain is a catalytic subunit. The protein is V-type ATP synthase alpha chain of Borrelia duttonii (strain Ly).